Consider the following 128-residue polypeptide: Small ribosomal subunit protein bS6 (128 aa).

It belongs to the bacterial ribosomal protein bS6 family.

In terms of biological role, binds together with bS18 to 16S ribosomal RNA. In Acinetobacter baylyi (strain ATCC 33305 / BD413 / ADP1), this protein is Small ribosomal subunit protein bS6.